The sequence spans 441 residues: uncharacterized protein (441 aa).

Residues 121-143 show a composition bias toward low complexity; the sequence is TLSPSIVSEQQQQQQQQQQQQQQ. Disordered stretches follow at residues 121–146 and 371–392; these read TLSP…QAIS and SDAD…TAPN. A compositionally biased stretch (polar residues) spans 382 to 391; it reads PTSAPSTTAP.

This is an uncharacterized protein from Dictyostelium discoideum (Social amoeba).